The chain runs to 353 residues: Photosystem II protein D1 (353 aa).

Thr2 is subject to N-acetylthreonine. Thr2 carries the post-translational modification Phosphothreonine. A run of 3 helical transmembrane segments spans residues Tyr29–Ser46, His118–Leu133, and Trp142–Ala156. A chlorophyll a-binding site is contributed by His118. Tyr126 contributes to the pheophytin a binding site. The [CaMn4O5] cluster site is built by Asp170 and Glu189. The chain crosses the membrane as a helical span at residues Phe197–Leu218. Residue His198 coordinates chlorophyll a. A quinone contacts are provided by residues His215 and Ser264–Phe265. His215 contacts Fe cation. A Fe cation-binding site is contributed by His272. The helical transmembrane segment at Phe274–Leu288 threads the bilayer. Positions 332, 333, 342, and 344 each coordinate [CaMn4O5] cluster. Positions Ala345–Gly353 are excised as a propeptide.

Belongs to the reaction center PufL/M/PsbA/D family. PSII is composed of 1 copy each of membrane proteins PsbA, PsbB, PsbC, PsbD, PsbE, PsbF, PsbH, PsbI, PsbJ, PsbK, PsbL, PsbM, PsbT, PsbX, PsbY, PsbZ, Psb30/Ycf12, at least 3 peripheral proteins of the oxygen-evolving complex and a large number of cofactors. It forms dimeric complexes. The cofactor is The D1/D2 heterodimer binds P680, chlorophylls that are the primary electron donor of PSII, and subsequent electron acceptors. It shares a non-heme iron and each subunit binds pheophytin, quinone, additional chlorophylls, carotenoids and lipids. D1 provides most of the ligands for the Mn4-Ca-O5 cluster of the oxygen-evolving complex (OEC). There is also a Cl(-1) ion associated with D1 and D2, which is required for oxygen evolution. The PSII complex binds additional chlorophylls, carotenoids and specific lipids.. Post-translationally, tyr-161 forms a radical intermediate that is referred to as redox-active TyrZ, YZ or Y-Z. C-terminally processed by CTPA; processing is essential to allow assembly of the oxygen-evolving complex and thus photosynthetic growth.

Its subcellular location is the plastid. It localises to the chloroplast thylakoid membrane. The enzyme catalyses 2 a plastoquinone + 4 hnu + 2 H2O = 2 a plastoquinol + O2. Photosystem II (PSII) is a light-driven water:plastoquinone oxidoreductase that uses light energy to abstract electrons from H(2)O, generating O(2) and a proton gradient subsequently used for ATP formation. It consists of a core antenna complex that captures photons, and an electron transfer chain that converts photonic excitation into a charge separation. The D1/D2 (PsbA/PsbD) reaction center heterodimer binds P680, the primary electron donor of PSII as well as several subsequent electron acceptors. This Ceratophyllum demersum (Rigid hornwort) protein is Photosystem II protein D1.